Reading from the N-terminus, the 182-residue chain is Small ribosomal subunit protein uS4c (182 aa).

Positions 8 to 36 (LGALPGLTSKRPGSGSDPKNKSRSGKRSQ) are disordered. The S4 RNA-binding domain maps to 82–143 (MRLDNILFRL…KQRSKALIQN (62 aa)).

Belongs to the universal ribosomal protein uS4 family. As to quaternary structure, part of the 30S ribosomal subunit. Contacts protein S5. The interaction surface between S4 and S5 is involved in control of translational fidelity.

It is found in the plastid. It localises to the chloroplast. Its function is as follows. One of the primary rRNA binding proteins, it binds directly to 16S rRNA where it nucleates assembly of the body of the 30S subunit. With S5 and S12 plays an important role in translational accuracy. The protein is Small ribosomal subunit protein uS4c (rps4) of Dietes robinsoniana (Lord Howe wedding lily).